We begin with the raw amino-acid sequence, 380 residues long: Probable RAD2-like endonuclease 076L (380 aa).

An N-domain region spans residues 1 to 101; it reads MGIKNLTQFL…QKIVSKTDAI (101 aa). Mg(2+) contacts are provided by D32, E73, E191, E193, D212, D214, and D281. Positions 156-301 are I-domain; sequence IDRRRKYEFS…EKAYKYISDY (146 aa).

It belongs to the XPG/RAD2 endonuclease family. The cofactor is Mg(2+).

The protein localises to the host nucleus. Functionally, probable endonuclease. This Invertebrate iridescent virus 3 (IIV-3) protein is Probable RAD2-like endonuclease 076L.